Consider the following 1043-residue polypeptide: Chitin synthase 2 (1043 aa).

The segment covering 1 to 10 has biased composition (polar residues); the sequence is MAQESSNMDQ. Disordered stretches follow at residues 1 to 133 and 215 to 234; these read MAQE…PRRP and ESDF…ERRG. The segment covering 11–21 has biased composition (basic and acidic residues); it reads SKSDNVTDNKP. Residues 43-58 are compositionally biased toward low complexity; sequence SASTSSLPTSRPSSSP. Polar residues-rich tracts occupy residues 59-73 and 81-93; these read GQSP…TSDT and VSPT…SRGS. Transmembrane regions (helical) follow at residues 663–683, 703–723, 738–758, 780–800, 907–927, and 931–951; these read FVSL…FYFI, IFAI…VLSM, MIIY…MVVM, YIIV…FLYL, YMVS…SEAF, and SVGN…LAVF.

It belongs to the chitin synthase family. Class II subfamily.

Its subcellular location is the cell membrane. The catalysed reaction is [(1-&gt;4)-N-acetyl-beta-D-glucosaminyl](n) + UDP-N-acetyl-alpha-D-glucosamine = [(1-&gt;4)-N-acetyl-beta-D-glucosaminyl](n+1) + UDP + H(+). In terms of biological role, polymerizes chitin, a structural polymer of the cell wall and septum, by transferring the sugar moiety of UDP-GlcNAc to the non-reducing end of the growing chitin polymer. The polypeptide is Chitin synthase 2 (CHS2) (Paracoccidioides brasiliensis).